The chain runs to 369 residues: tRNA 2-selenouridine synthase (369 aa).

One can recognise a Rhodanese domain in the interval 15-138 (FIAGQPLIDL…MRQYLIGVIE (124 aa)). Catalysis depends on Cys98, which acts as the S-selanylcysteine intermediate.

This sequence belongs to the SelU family. In terms of assembly, monomer.

The enzyme catalyses 5-methylaminomethyl-2-thiouridine(34) in tRNA + selenophosphate + (2E)-geranyl diphosphate + H2O + H(+) = 5-methylaminomethyl-2-selenouridine(34) in tRNA + (2E)-thiogeraniol + phosphate + diphosphate. The catalysed reaction is 5-methylaminomethyl-2-thiouridine(34) in tRNA + (2E)-geranyl diphosphate = 5-methylaminomethyl-S-(2E)-geranyl-thiouridine(34) in tRNA + diphosphate. It carries out the reaction 5-methylaminomethyl-S-(2E)-geranyl-thiouridine(34) in tRNA + selenophosphate + H(+) = 5-methylaminomethyl-2-(Se-phospho)selenouridine(34) in tRNA + (2E)-thiogeraniol. It catalyses the reaction 5-methylaminomethyl-2-(Se-phospho)selenouridine(34) in tRNA + H2O = 5-methylaminomethyl-2-selenouridine(34) in tRNA + phosphate. Its function is as follows. Involved in the post-transcriptional modification of the uridine at the wobble position (U34) of tRNA(Lys), tRNA(Glu) and tRNA(Gln). Catalyzes the conversion of 2-thiouridine (S2U-RNA) to 2-selenouridine (Se2U-RNA). Acts in a two-step process involving geranylation of 2-thiouridine (S2U) to S-geranyl-2-thiouridine (geS2U) and subsequent selenation of the latter derivative to 2-selenouridine (Se2U) in the tRNA chain. The sequence is that of tRNA 2-selenouridine synthase from Shewanella sp. (strain MR-7).